We begin with the raw amino-acid sequence, 394 residues long: 1-deoxy-D-xylulose 5-phosphate reductoisomerase (394 aa).

Thr10, Gly11, Ser12, Ile13, Gly38, Arg39, Asn40, and Asn123 together coordinate NADPH. Position 124 (Lys124) interacts with 1-deoxy-D-xylulose 5-phosphate. Residue Glu125 participates in NADPH binding. Asp149 is a Mn(2+) binding site. 1-deoxy-D-xylulose 5-phosphate is bound by residues Ser150, Glu151, Ser175, and His198. A Mn(2+)-binding site is contributed by Glu151. Gly204 contributes to the NADPH binding site. 1-deoxy-D-xylulose 5-phosphate contacts are provided by Ser211, Asn216, Lys217, and Glu220. Glu220 is a binding site for Mn(2+).

This sequence belongs to the DXR family. Mg(2+) serves as cofactor. It depends on Mn(2+) as a cofactor.

The catalysed reaction is 2-C-methyl-D-erythritol 4-phosphate + NADP(+) = 1-deoxy-D-xylulose 5-phosphate + NADPH + H(+). The protein operates within isoprenoid biosynthesis; isopentenyl diphosphate biosynthesis via DXP pathway; isopentenyl diphosphate from 1-deoxy-D-xylulose 5-phosphate: step 1/6. In terms of biological role, catalyzes the NADPH-dependent rearrangement and reduction of 1-deoxy-D-xylulose-5-phosphate (DXP) to 2-C-methyl-D-erythritol 4-phosphate (MEP). In Cereibacter sphaeroides (strain ATCC 17023 / DSM 158 / JCM 6121 / CCUG 31486 / LMG 2827 / NBRC 12203 / NCIMB 8253 / ATH 2.4.1.) (Rhodobacter sphaeroides), this protein is 1-deoxy-D-xylulose 5-phosphate reductoisomerase.